The primary structure comprises 484 residues: PTS system MurNAc-GlcNAc-specific EIIBC component (484 aa).

One can recognise a PTS EIIB type-1 domain in the interval 5-87 (QQLAERIIAA…AELSGVKLGD (83 aa)). Cys-27 functions as the Phosphocysteine intermediate; for EIIB activity in the catalytic mechanism. Residues 130–484 (KSIANIFIPL…AMRQTDLLGD (355 aa)) enclose the PTS EIIC type-1 domain. Helical transmembrane passes span 135 to 155 (IFIP…IAAV), 160 to 180 (MVAG…FNVI), 200 to 220 (FGAT…TGIA), 234 to 254 (LQPG…LSIV), 274 to 294 (IALL…AGFV), 305 to 325 (IISI…LPLV), 349 to 369 (LLPI…ALWV), 384 to 404 (ALPV…TLPL), 408 to 428 (FLTA…IGHI), and 450 to 470 (LGYI…TYLF).

Its subcellular location is the cell membrane. The catalysed reaction is N-acetyl-beta-D-muramate-(1-&gt;4)-N-acetyl-D-glucosamine(out) + N(pros)-phospho-L-histidyl-[protein] = 6-phospho-N-acetyl-beta-D-muramate-(1-&gt;4)-N-acetyl-D-glucosamine(in) + L-histidyl-[protein]. The protein operates within cell wall biogenesis; peptidoglycan recycling. In terms of biological role, the phosphoenolpyruvate-dependent sugar phosphotransferase system (sugar PTS), a major carbohydrate active transport system, catalyzes the phosphorylation of incoming sugar substrates concomitantly with their translocation across the cell membrane. This system is involved in the uptake and phosphorylation of MurNAc-GlcNAc, the principle peptidoglycan turnover product of S.aureus, yielding cytoplasmic MurNAc 6P-GlcNAc. This chain is PTS system MurNAc-GlcNAc-specific EIIBC component, found in Staphylococcus aureus (strain bovine RF122 / ET3-1).